The sequence spans 173 residues: VQ motif-containing protein 31 (173 aa).

Residues 27–36 (FREIVQRLTG) carry the VQ motif. Threonine 46 is modified (phosphothreonine). Disordered stretches follow at residues 76–105 (EIVK…TSPV) and 143–173 (LHPS…SGKP). Polar residues predominate over residues 86 to 105 (PTGTTPSSKSGNTNLLTSPV). 4 positions are modified to phosphoserine: serine 92, serine 103, serine 146, and serine 149. Residues 154–165 (TEPELLTLFPLT) are compositionally biased toward low complexity. At threonine 165 the chain carries Phosphothreonine. A phosphoserine mark is found at serine 166 and serine 170.

Phosphorylated on serine and threonine residues by MPK6.

It is found in the nucleus. Its function is as follows. May modulate WRKY transcription factor activities. The polypeptide is VQ motif-containing protein 31 (Arabidopsis thaliana (Mouse-ear cress)).